We begin with the raw amino-acid sequence, 1191 residues long: Serine/threonine-protein kinase dkf-2 (1191 aa).

Disordered regions lie at residues 11–48 (YTSMPSSSTSNHRIDRLSSSSSSTFRRDDFRRHSTTTS) and 108–155 (MLSR…GGHV). Basic and acidic residues predominate over residues 123–139 (TPDDHYSNPSDKRREVP). A compositionally biased stretch (low complexity) spans 140–150 (SIRSTSSNSSS). 2 Phorbol-ester/DAG-type zinc fingers span residues 314–364 (PHTL…PNNC) and 466–531 (PHTF…AKDC). Residues 549-594 (VSEDRDDDLSLRSGSGGHKKAQNTPSAPLQGSEGSGSPGGAVVSFA) form a disordered region. In terms of domain architecture, PH spans 632 to 713 (LLKEGWIVHY…VYFVYSSLTD (82 aa)). Residues 730 to 786 (PSTVSSTDSGYLGSSGASSSCVRSREGSTVSSTITVDRTRRGGSTTSTENSEAESES) are disordered. Positions 738 to 751 (SGYLGSSGASSSCV) are enriched in low complexity. A compositionally biased stretch (polar residues) spans 756-765 (GSTVSSTITV). Positions 773-786 (STTSTENSEAESES) are enriched in low complexity. One can recognise a Protein kinase domain in the interval 891–1147 (IFAEEVLGSG…VAKAQSHIWM (257 aa)). Residues 897 to 905 (LGSGQFGTV) and Lys920 contribute to the ATP site. The active-site Proton acceptor is Asp1014. 2 positions are modified to phosphoserine: Ser1046 and Ser1050.

The protein belongs to the protein kinase superfamily. CAMK Ser/Thr protein kinase family. PKD subfamily. Mg(2+) serves as cofactor. In terms of processing, phosphorylation on Ser-1046 is the dominant regulator of catalysis, phosphorylation on Ser-1050 has a lesser effect. Prolonged phosphorylation results in ubiquitination and degradation.

The protein resides in the cytoplasm. It localises to the membrane. The enzyme catalyses L-seryl-[protein] + ATP = O-phospho-L-seryl-[protein] + ADP + H(+). The catalysed reaction is L-threonyl-[protein] + ATP = O-phospho-L-threonyl-[protein] + ADP + H(+). Its activity is regulated as follows. Activated by DAG and phorbol esters. Phorbol-ester/DAG-type domain 1 binds phorbol ester with low affinity. Phorbol-ester/DAG-type domain 2 binds phorbol ester with high affinity and targets the kinase to the cell periphery, enabling phosphorylation and activation by colocalized tpa-1. Both domains 1 and 2 appear to bind DAG with equal affinity so may contribute equally to translocation and activation. In terms of biological role, converts transient diacylglycerol (DAG) signals into prolonged physiological effects, downstream of PKC. Acts in the intestine to regulate both innate immunity by promoting activation of pmk-1 and also stress response and life span by acting as an upstream, negative regulator of the daf-16 transcription factor. The polypeptide is Serine/threonine-protein kinase dkf-2 (Caenorhabditis briggsae).